The following is a 489-amino-acid chain: ATP synthase subunit beta, chloroplastic (489 aa).

Residue 170–177 (GGAGVGKT) coordinates ATP.

It belongs to the ATPase alpha/beta chains family. As to quaternary structure, F-type ATPases have 2 components, CF(1) - the catalytic core - and CF(0) - the membrane proton channel. CF(1) has five subunits: alpha(3), beta(3), gamma(1), delta(1), epsilon(1). CF(0) has four main subunits: a(1), b(1), b'(1) and c(9-12).

The protein localises to the plastid. Its subcellular location is the chloroplast thylakoid membrane. The catalysed reaction is ATP + H2O + 4 H(+)(in) = ADP + phosphate + 5 H(+)(out). Its function is as follows. Produces ATP from ADP in the presence of a proton gradient across the membrane. The catalytic sites are hosted primarily by the beta subunits. The protein is ATP synthase subunit beta, chloroplastic of Zygnema circumcarinatum (Green alga).